A 1025-amino-acid polypeptide reads, in one-letter code: Presequence protease, mitochondrial (1025 aa).

A Zn(2+)-binding site is contributed by His90. Glu93 serves as the catalytic Proton acceptor. His94 serves as a coordination point for Zn(2+). Glu166 is an active-site residue. Glu197 provides a ligand contact to Zn(2+).

Belongs to the peptidase M16 family. PreP subfamily. As to quaternary structure, monomer and homodimer; homodimerization is induced by binding of the substrate. It depends on Zn(2+) as a cofactor.

It is found in the mitochondrion intermembrane space. It localises to the mitochondrion matrix. Its function is as follows. Degrades mitochondrial transit peptides after their cleavage in the intermembrane space or in the matrix, and presequence peptides; clearance of these peptides is required to keep the presequence processing machinery running. Preferentially cleaves the N-terminal side of paired basic amino acid residues. Also degrades other unstructured peptides. May function as an ATP-dependent peptidase as opposed to a metalloendopeptidase. This Aspergillus oryzae (strain ATCC 42149 / RIB 40) (Yellow koji mold) protein is Presequence protease, mitochondrial (cym1).